The sequence spans 448 residues: Adenylosuccinate synthetase (448 aa).

GTP is bound by residues 22 to 28 (GDEGKGK) and 50 to 52 (GHT). Residue aspartate 23 is the Proton acceptor of the active site. Positions 23 and 50 each coordinate Mg(2+). IMP contacts are provided by residues 23–26 (DEGK), 48–51 (NAGH), threonine 139, arginine 153, glutamine 234, threonine 249, and arginine 321. Residue histidine 51 is the Proton donor of the active site. 317-323 (SVTGRPR) lines the substrate pocket. Residues arginine 323, 349–351 (KLD), and 431–433 (STG) each bind GTP.

Belongs to the adenylosuccinate synthetase family. In terms of assembly, homodimer. Requires Mg(2+) as cofactor.

Its subcellular location is the cytoplasm. It catalyses the reaction IMP + L-aspartate + GTP = N(6)-(1,2-dicarboxyethyl)-AMP + GDP + phosphate + 2 H(+). It functions in the pathway purine metabolism; AMP biosynthesis via de novo pathway; AMP from IMP: step 1/2. In terms of biological role, plays an important role in the de novo pathway of purine nucleotide biosynthesis. Catalyzes the first committed step in the biosynthesis of AMP from IMP. This Paraburkholderia phymatum (strain DSM 17167 / CIP 108236 / LMG 21445 / STM815) (Burkholderia phymatum) protein is Adenylosuccinate synthetase.